Reading from the N-terminus, the 364-residue chain is UDP-3-O-acylglucosamine N-acyltransferase (364 aa).

His-267 serves as the catalytic Proton acceptor.

The protein belongs to the transferase hexapeptide repeat family. LpxD subfamily. As to quaternary structure, homotrimer.

The catalysed reaction is a UDP-3-O-[(3R)-3-hydroxyacyl]-alpha-D-glucosamine + a (3R)-hydroxyacyl-[ACP] = a UDP-2-N,3-O-bis[(3R)-3-hydroxyacyl]-alpha-D-glucosamine + holo-[ACP] + H(+). It participates in bacterial outer membrane biogenesis; LPS lipid A biosynthesis. Functionally, catalyzes the N-acylation of UDP-3-O-acylglucosamine using 3-hydroxyacyl-ACP as the acyl donor. Is involved in the biosynthesis of lipid A, a phosphorylated glycolipid that anchors the lipopolysaccharide to the outer membrane of the cell. This is UDP-3-O-acylglucosamine N-acyltransferase from Bordetella petrii (strain ATCC BAA-461 / DSM 12804 / CCUG 43448).